The following is a 302-amino-acid chain: 4-hydroxy-tetrahydrodipicolinate synthase (302 aa).

A pyruvate-binding site is contributed by Thr-55. The active-site Proton donor/acceptor is Tyr-144. Residue Lys-172 is the Schiff-base intermediate with substrate of the active site. Val-214 provides a ligand contact to pyruvate.

This sequence belongs to the DapA family. Homotetramer; dimer of dimers.

Its subcellular location is the cytoplasm. It carries out the reaction L-aspartate 4-semialdehyde + pyruvate = (2S,4S)-4-hydroxy-2,3,4,5-tetrahydrodipicolinate + H2O + H(+). It participates in amino-acid biosynthesis; L-lysine biosynthesis via DAP pathway; (S)-tetrahydrodipicolinate from L-aspartate: step 3/4. Functionally, catalyzes the condensation of (S)-aspartate-beta-semialdehyde [(S)-ASA] and pyruvate to 4-hydroxy-tetrahydrodipicolinate (HTPA). The sequence is that of 4-hydroxy-tetrahydrodipicolinate synthase from Prochlorococcus marinus (strain NATL2A).